A 277-amino-acid polypeptide reads, in one-letter code: MAGTETGDAAGTEAPQPQKRYYRQRAHSNPMADHTLRYPVKPEDMDWSELYPEFFAPLPQNQSHDDPKDKKEKRAQAQVEFADIGCGYGGLLVELSPLFPDTLILGLEIRVKVSDYVQDRIRALRAAPGGGFQNIACLRSNAMKHLPNFFHKGQLTKMFFLFPDPHFKRTKHKWRIISPTLLAEYAYVLRVGGLVYTITDVLELHEWMCTHFEGHPLFERVPLEELSEDPIVGHLGTSTEEGKKVLRNGGKNFPAIFRRIQDPALPAVTPTPTPPGH.

The disordered stretch occupies residues 1–37; it reads MAGTETGDAAGTEAPQPQKRYYRQRAHSNPMADHTLR. Phosphoserine is present on serine 28. S-adenosyl-L-methionine-binding residues include glycine 85, glutamate 108, arginine 110, asparagine 141, alanine 142, and leucine 161. The active site involves aspartate 164. The alphaC helix stretch occupies residues 165 to 173; sequence PHFKRTKHK. Residues threonine 239 and glutamate 241 each coordinate S-adenosyl-L-methionine. Positions 239 to 247 are alpha6 helix; it reads TEEGKKVLR.

Belongs to the class I-like SAM-binding methyltransferase superfamily. TrmB family. In terms of assembly, catalytic component of the METTL1-WDR4 complex, composed of METTL1 and WDR4. Post-translationally, phosphorylation at Ser-28 by PKB/AKT1 inactivates its methyltransferase activity via a steric interference mechanism in the active site that locally disrupts the catalytic center. Phosphorylation at Ser-28 does not affect the interaction with WDR4.

The protein resides in the nucleus. It catalyses the reaction guanosine(46) in tRNA + S-adenosyl-L-methionine = N(7)-methylguanosine(46) in tRNA + S-adenosyl-L-homocysteine. The enzyme catalyses a guanosine in mRNA + S-adenosyl-L-methionine = an N(7)-methylguanosine in mRNA + S-adenosyl-L-homocysteine. The catalysed reaction is a guanosine in miRNA + S-adenosyl-L-methionine = an N(7)-methylguanosine in miRNA + S-adenosyl-L-homocysteine. It participates in tRNA modification; N(7)-methylguanine-tRNA biosynthesis. In terms of biological role, catalytic component of METTL1-WDR4 methyltransferase complex that mediates the formation of N(7)-methylguanine in a subset of RNA species, such as tRNAs, mRNAs and microRNAs (miRNAs). Catalyzes the formation of N(7)-methylguanine at position 46 (m7G46) in a large subset of tRNAs that contain the 5'-RAGGU-3' motif within the variable loop. M7G46 interacts with C13-G22 in the D-loop to stabilize tRNA tertiary structure and protect tRNAs from decay. Also acts as a methyltransferase for a subset of internal N(7)-methylguanine in mRNAs. Internal N(7)-methylguanine methylation of mRNAs in response to stress promotes their relocalization to stress granules, thereby suppressing their translation. Also methylates a specific subset of miRNAs, such as let-7. N(7)-methylguanine methylation of let-7 miRNA promotes let-7 miRNA processing by disrupting an inhibitory secondary structure within the primary miRNA transcript (pri-miRNA). Acts as a regulator of embryonic stem cell self-renewal and differentiation. The protein is tRNA (guanine-N(7)-)-methyltransferase of Bos taurus (Bovine).